The chain runs to 216 residues: Probable GTP-binding protein EngB (216 aa).

One can recognise an EngB-type G domain in the interval 37-214 (QGLEVAFAGR…RAAIIKLVAE (178 aa)). Residues 45-52 (GRSNVGKS), 72-76 (GRTQE), 92-95 (DMPG), 159-162 (TKAD), and 193-195 (TSS) contribute to the GTP site. S52 and T74 together coordinate Mg(2+).

The protein belongs to the TRAFAC class TrmE-Era-EngA-EngB-Septin-like GTPase superfamily. EngB GTPase family. Mg(2+) is required as a cofactor.

Its function is as follows. Necessary for normal cell division and for the maintenance of normal septation. The polypeptide is Probable GTP-binding protein EngB (Rhodopseudomonas palustris (strain BisA53)).